We begin with the raw amino-acid sequence, 343 residues long: L-threonine 3-dehydrogenase (343 aa).

Cys-38 contacts Zn(2+). Catalysis depends on charge relay system residues Thr-40 and His-43. Zn(2+) is bound by residues His-63, Glu-64, Cys-93, Cys-96, Cys-99, and Cys-107. Residues Ile-175, Asp-195, Arg-200, 262–264, and 286–287 each bind NAD(+); these read LGI and IY.

This sequence belongs to the zinc-containing alcohol dehydrogenase family. As to quaternary structure, homotetramer. The cofactor is Zn(2+).

The protein resides in the cytoplasm. It carries out the reaction L-threonine + NAD(+) = (2S)-2-amino-3-oxobutanoate + NADH + H(+). It participates in amino-acid degradation; L-threonine degradation via oxydo-reductase pathway; glycine from L-threonine: step 1/2. Catalyzes the NAD(+)-dependent oxidation of L-threonine to 2-amino-3-ketobutyrate. The sequence is that of L-threonine 3-dehydrogenase from Paraburkholderia xenovorans (strain LB400).